Reading from the N-terminus, the 156-residue chain is Small ribosomal subunit protein uS7 (156 aa).

It belongs to the universal ribosomal protein uS7 family. In terms of assembly, part of the 30S ribosomal subunit. Contacts proteins S9 and S11.

One of the primary rRNA binding proteins, it binds directly to 16S rRNA where it nucleates assembly of the head domain of the 30S subunit. Is located at the subunit interface close to the decoding center, probably blocks exit of the E-site tRNA. The polypeptide is Small ribosomal subunit protein uS7 (Limosilactobacillus reuteri (strain DSM 20016) (Lactobacillus reuteri)).